The following is a 505-amino-acid chain: Maturase K (505 aa).

The protein belongs to the intron maturase 2 family. MatK subfamily.

Its subcellular location is the plastid. The protein localises to the chloroplast. Usually encoded in the trnK tRNA gene intron. Probably assists in splicing its own and other chloroplast group II introns. The protein is Maturase K of Morus indica (Mulberry).